Consider the following 167-residue polypeptide: Ureidoglycolate lyase (167 aa).

Belongs to the ureidoglycolate lyase family. Homodimer. It depends on Ni(2+) as a cofactor.

The enzyme catalyses (S)-ureidoglycolate = urea + glyoxylate. It functions in the pathway nitrogen metabolism; (S)-allantoin degradation. Catalyzes the catabolism of the allantoin degradation intermediate (S)-ureidoglycolate, generating urea and glyoxylate. Involved in the utilization of allantoin as nitrogen source. The chain is Ureidoglycolate lyase from Pseudomonas putida (strain ATCC 700007 / DSM 6899 / JCM 31910 / BCRC 17059 / LMG 24140 / F1).